Here is a 218-residue protein sequence, read N- to C-terminus: Outer-membrane lipoprotein LolB (218 aa).

An N-terminal signal peptide occupies residues 1 to 24; that stretch reads MNNLSYLTKIPLIWVLLSVTLLSA. Residue Cys-25 is the site of N-palmitoyl cysteine attachment. Cys-25 carries S-diacylglycerol cysteine lipidation.

Belongs to the LolB family. In terms of assembly, monomer.

It is found in the cell outer membrane. Functionally, plays a critical role in the incorporation of lipoproteins in the outer membrane after they are released by the LolA protein. This is Outer-membrane lipoprotein LolB from Shewanella sediminis (strain HAW-EB3).